A 423-amino-acid chain; its full sequence is UPF0229 protein PSPTO_0546 (423 aa).

The disordered stretch occupies residues 65-110 (HHGRGGKQTVVHPGNKEFTTGEHIARPQGGAGGKGPGKAGNSGEGM). Residues 93-107 (GGAGGKGPGKAGNSG) are compositionally biased toward gly residues.

It belongs to the UPF0229 family.

This is UPF0229 protein PSPTO_0546 from Pseudomonas syringae pv. tomato (strain ATCC BAA-871 / DC3000).